Here is a 476-residue protein sequence, read N- to C-terminus: NADH-quinone oxidoreductase subunit N (476 aa).

Helical transmembrane passes span 10 to 30 (AVLPELLLALSAVVLVLIGAI), 42 to 62 (LAIAALVAAGVLVMLQPAVTI), 77 to 97 (FMKVVALLGAAVSLIMSVDWL), 108 to 128 (AVLVVLASLGICILISAGDLI), 129 to 149 (ALYLGLELMSLSLYVVAAINR), 162 to 182 (FVLGALSSGMLLYGASLIYGF), 202 to 222 (LVFGIVFLFAGLCFKVSAVPF), 234 to 254 (PTPVTAFFATAPKVAAMAVFV), 268 to 288 (WQQIVTFVSIASMALGAFAAI), 296 to 316 (LLAYSSIGHMGFALVGLAAGT), 323 to 343 (VLLYMAIYVVMTLGSFTCVLA), 368 to 388 (ALALAALMFSLAGIPPLAGFV), 392 to 412 (YVFLAAIQAGLYGLAVIGVVA), and 445 to 465 (AVLAVSGLFTTFFFLAPTPLI).

It belongs to the complex I subunit 2 family. NDH-1 is composed of 14 different subunits. Subunits NuoA, H, J, K, L, M, N constitute the membrane sector of the complex.

The protein resides in the cell inner membrane. The catalysed reaction is a quinone + NADH + 5 H(+)(in) = a quinol + NAD(+) + 4 H(+)(out). NDH-1 shuttles electrons from NADH, via FMN and iron-sulfur (Fe-S) centers, to quinones in the respiratory chain. The immediate electron acceptor for the enzyme in this species is believed to be ubiquinone. Couples the redox reaction to proton translocation (for every two electrons transferred, four hydrogen ions are translocated across the cytoplasmic membrane), and thus conserves the redox energy in a proton gradient. The sequence is that of NADH-quinone oxidoreductase subunit N from Azorhizobium caulinodans (strain ATCC 43989 / DSM 5975 / JCM 20966 / LMG 6465 / NBRC 14845 / NCIMB 13405 / ORS 571).